The sequence spans 64 residues: Hypoxia-inducible lipid droplet-associated protein (64 aa).

Residues 1–37 (MKFMLNLYVLGIMLTLLSIFVRVMESLGGLLESPLPG) form a required for targeting to lipid droplets region. The helical transmembrane segment at 7–24 (LYVLGIMLTLLSIFVRVM) threads the bilayer. Residues 42 to 51 (TRGQLANTQP) are compositionally biased toward polar residues. Residues 42–64 (TRGQLANTQPPKGLPDHPSRGVQ) are disordered. Residues 55–64 (LPDHPSRGVQ) show a composition bias toward basic and acidic residues.

It is found in the lipid droplet. The protein resides in the secreted. It localises to the membrane. In terms of biological role, increases intracellular lipid accumulation. Stimulates expression of cytokines including IL6, MIF and VEGFA. Enhances cell growth and proliferation. The chain is Hypoxia-inducible lipid droplet-associated protein (Hilpda) from Mus musculus (Mouse).